The primary structure comprises 322 residues: Helix-loop-helix 34 (322 aa).

Residues 1 to 11 are compositionally biased toward basic and acidic residues; it reads METNLSEEKQK. Residues 1-23 are disordered; that stretch reads METNLSEEKQKPSKSQAQQRRQM. In terms of domain architecture, bHLH spans 8–62; the sequence is EKQKPSKSQAQQRRQMENYEFSQLANELPLARAISGQHIDKTTMVRLATAYIKLH. 2 consecutive PAS domains span residues 82 to 152 and 203 to 276; these read DSLW…DLNW and PTPV…FNLG.

In terms of assembly, efficient DNA binding requires dimerization with another bHLH protein. As to expression, expressed in a small subset of neurons, probably AVJL and AVJR. Expressed in the AVH neurons.

The protein resides in the nucleus. In terms of biological role, transcription factor. Involved in specifying AVH neuron identity, acting in concert with unc-42. Involved in serotonin-mediated feeding behavior, probably acting by modulating expression of genes involved in glutamate signaling. This chain is Helix-loop-helix 34 (hlh-34), found in Caenorhabditis elegans.